Consider the following 88-residue polypeptide: MAKEELLELDGVVDEVLPDSRFRVTLENGAVVAAYASGRMRKHRIRILAGDRVKLELSVYDLTKGCINFRHKDERASPGVPRNRFVRR.

The S1-like domain occupies 1-72; the sequence is MAKEELLELD…TKGCINFRHK (72 aa).

This sequence belongs to the IF-1 family. As to quaternary structure, component of the 30S ribosomal translation pre-initiation complex which assembles on the 30S ribosome in the order IF-2 and IF-3, IF-1 and N-formylmethionyl-tRNA(fMet); mRNA recruitment can occur at any time during PIC assembly.

The protein localises to the cytoplasm. Functionally, one of the essential components for the initiation of protein synthesis. Stabilizes the binding of IF-2 and IF-3 on the 30S subunit to which N-formylmethionyl-tRNA(fMet) subsequently binds. Helps modulate mRNA selection, yielding the 30S pre-initiation complex (PIC). Upon addition of the 50S ribosomal subunit IF-1, IF-2 and IF-3 are released leaving the mature 70S translation initiation complex. In Burkholderia orbicola (strain AU 1054), this protein is Translation initiation factor IF-1 3.